A 297-amino-acid chain; its full sequence is Acetyl-coenzyme A carboxylase carboxyl transferase subunit beta (297 aa).

The CoA carboxyltransferase N-terminal domain maps to 25 to 294 (LWVKCPETGQ…VPPKGRLPAP (270 aa)).

This sequence belongs to the AccD/PCCB family. As to quaternary structure, acetyl-CoA carboxylase is a heterohexamer composed of biotin carboxyl carrier protein (AccB), biotin carboxylase (AccC) and two subunits each of ACCase subunit alpha (AccA) and ACCase subunit beta (AccD).

Its subcellular location is the cytoplasm. It catalyses the reaction N(6)-carboxybiotinyl-L-lysyl-[protein] + acetyl-CoA = N(6)-biotinyl-L-lysyl-[protein] + malonyl-CoA. It participates in lipid metabolism; malonyl-CoA biosynthesis; malonyl-CoA from acetyl-CoA: step 1/1. Functionally, component of the acetyl coenzyme A carboxylase (ACC) complex. Biotin carboxylase (BC) catalyzes the carboxylation of biotin on its carrier protein (BCCP) and then the CO(2) group is transferred by the transcarboxylase to acetyl-CoA to form malonyl-CoA. The protein is Acetyl-coenzyme A carboxylase carboxyl transferase subunit beta of Azorhizobium caulinodans (strain ATCC 43989 / DSM 5975 / JCM 20966 / LMG 6465 / NBRC 14845 / NCIMB 13405 / ORS 571).